The chain runs to 296 residues: Ribonuclease HIII (296 aa).

Residues 80–296 (LALIGSDEVG…NTKKAYQRLK (217 aa)) enclose the RNase H type-2 domain. Residues Asp86, Glu87, and Asp191 each contribute to the a divalent metal cation site.

This sequence belongs to the RNase HII family. RnhC subfamily. It depends on Mn(2+) as a cofactor. The cofactor is Mg(2+).

Its subcellular location is the cytoplasm. It carries out the reaction Endonucleolytic cleavage to 5'-phosphomonoester.. In terms of biological role, endonuclease that specifically degrades the RNA of RNA-DNA hybrids. The sequence is that of Ribonuclease HIII from Streptococcus thermophilus (strain ATCC BAA-250 / LMG 18311).